The following is a 264-amino-acid chain: Cysteine-rich repeat secretory protein 26 (264 aa).

Positions 1–27 are cleaved as a signal peptide; it reads MSSNIFGSVPILVVVAIQLLLVHNVSS. Gnk2-homologous domains follow at residues 34–142 and 148–261; these read YLNH…SVDS and YKRM…LYPF.

It belongs to the cysteine-rich repeat secretory protein family.

It is found in the secreted. The protein is Cysteine-rich repeat secretory protein 26 (CRRSP26) of Arabidopsis thaliana (Mouse-ear cress).